A 396-amino-acid chain; its full sequence is Elongation factor Tu (396 aa).

In terms of domain architecture, tr-type G spans 10-206; the sequence is KPHVNVGTIG…TLDEYIPEPE (197 aa). The tract at residues 19–26 is G1; the sequence is GHVDHGKT. 19–26 serves as a coordination point for GTP; sequence GHVDHGKT. Threonine 26 lines the Mg(2+) pocket. A G2 region spans residues 60–64; that stretch reads GITIA. A G3 region spans residues 81–84; the sequence is DCPG. GTP contacts are provided by residues 81–85 and 136–139; these read DCPGH and NKAD. A G4 region spans residues 136–139; it reads NKAD. The tract at residues 174 to 176 is G5; that stretch reads SAL.

The protein belongs to the TRAFAC class translation factor GTPase superfamily. Classic translation factor GTPase family. EF-Tu/EF-1A subfamily. In terms of assembly, monomer.

Its subcellular location is the cytoplasm. It catalyses the reaction GTP + H2O = GDP + phosphate + H(+). Functionally, GTP hydrolase that promotes the GTP-dependent binding of aminoacyl-tRNA to the A-site of ribosomes during protein biosynthesis. This is Elongation factor Tu from Alcanivorax borkumensis (strain ATCC 700651 / DSM 11573 / NCIMB 13689 / SK2).